A 249-amino-acid polypeptide reads, in one-letter code: 2,3-bisphosphoglycerate-dependent phosphoglycerate mutase (249 aa).

Residues 9–16 (RHGQSQWN), 22–23 (TG), Arg-61, 88–91 (ERHY), Lys-99, 115–116 (RR), and 184–185 (GN) each bind substrate. The active-site Tele-phosphohistidine intermediate is His-10. Catalysis depends on Glu-88, which acts as the Proton donor/acceptor.

The protein belongs to the phosphoglycerate mutase family. BPG-dependent PGAM subfamily. Homodimer.

It carries out the reaction (2R)-2-phosphoglycerate = (2R)-3-phosphoglycerate. It participates in carbohydrate degradation; glycolysis; pyruvate from D-glyceraldehyde 3-phosphate: step 3/5. In terms of biological role, catalyzes the interconversion of 2-phosphoglycerate and 3-phosphoglycerate. This Xanthomonas axonopodis pv. citri (strain 306) protein is 2,3-bisphosphoglycerate-dependent phosphoglycerate mutase.